The sequence spans 2513 residues: Probable polyketide synthase 7 (2513 aa).

The Ketosynthase family 3 (KS3) domain maps to 11-441; that stretch reads EKGVAIVGIG…GSNCCLLISE (431 aa). Active-site for beta-ketoacyl synthase activity residues include C181, H323, and H362. The tract at residues 632-665 is acyl/malonyl transferase; sequence GVNPSFILGHSLGEISASYCSGMIDLDTFCYTVY. S642 functions as the For acyl/malonyl transferase activity in the catalytic mechanism. Positions 922–1044 are N-terminal hotdog fold; the sequence is IDHLGISNSF…SNFQLLDHGN (123 aa). In terms of domain architecture, PKS/mFAS DH spans 922–1206; that stretch reads IDHLGISNSF…CKSLIPIKDS (285 aa). The active-site Proton acceptor; for dehydratase activity is the H956. The C-terminal hotdog fold stretch occupies residues 1061-1206; the sequence is NLSKLTKNEL…CKSLIPIKDS (146 aa). D1119 (proton donor; for dehydratase activity) is an active-site residue. The Carrier domain maps to 2426-2503; sequence IGNKNIDELF…ISIKMILNSL (78 aa). S2463 carries the O-(pantetheine 4'-phosphoryl)serine modification.

Requires pantetheine 4'-phosphate as cofactor.

Its function is as follows. Probable polyketide synthase. The protein is Probable polyketide synthase 7 (pks7) of Dictyostelium discoideum (Social amoeba).